The following is a 60-amino-acid chain: Bowman-Birk type proteinase inhibitor C1 (60 aa).

Cystine bridges form between Cys-5-Cys-21, Cys-11-Cys-19, Cys-28-Cys-35, and Cys-32-Cys-49.

Belongs to the Bowman-Birk serine protease inhibitor family. As to expression, expressed in bulb (at protein level).

Its function is as follows. Serine protease inhibitor. Strongly inhibits trypsin (Ki = 0.22 nM) and very weakly inhibits chymotrypsin (Ki = 1200 nM). Does not inhibit bacterial subtilisin. This is Bowman-Birk type proteinase inhibitor C1 from Hyacinthus orientalis (Common hyacinth).